A 495-amino-acid chain; its full sequence is uncharacterized protein (495 aa).

It is found in the cytoplasm. The protein localises to the nucleus. This is an uncharacterized protein from Saccharomyces cerevisiae (strain ATCC 204508 / S288c) (Baker's yeast).